Reading from the N-terminus, the 1034-residue chain is Ubiquitin-like-specific protease 2 (1034 aa).

Disordered regions lie at residues 1 to 42 (MSAR…FRKD), 71 to 110 (IELS…HSSL), 388 to 419 (SHAV…DDAT), 731 to 800 (IDQS…PIRH), 841 to 960 (GVSS…DSLG), and 983 to 1034 (SSPT…DEDP). The span at 19 to 33 (SSRASSPRSSASLPP) shows a compositional bias: low complexity. Acidic residues predominate over residues 74 to 85 (SDNDVDNNDEGE). Residues 743 to 756 (TSEPPCSRSSSIST) are compositionally biased toward low complexity. At S788 the chain carries Phosphoserine. Composition is skewed to polar residues over residues 845-856 (PIKNDQALSSTH), 876-904 (QLSS…VISD), and 912-923 (GVNSESKNTSGI). S903 is modified (phosphoserine). Residues S983 and S984 each carry the phosphoserine modification. Positions 992–1017 (TSATSKGSNAQLLSNYGDENNQSQDS) are enriched in polar residues.

It belongs to the peptidase C48 family.

Functionally, insertion mutation in SMT4 confers temperature and benomyl sensitivity; high copy suppressor of a temperature sensitive mutation in MIF2. The protein is Ubiquitin-like-specific protease 2 (ULP2) of Saccharomyces cerevisiae (strain ATCC 204508 / S288c) (Baker's yeast).